The sequence spans 479 residues: Ribosomal RNA small subunit methyltransferase F (479 aa).

S-adenosyl-L-methionine contacts are provided by residues 125–131 (AAAPGSK), E149, D176, and D194. Catalysis depends on C247, which acts as the Nucleophile.

This sequence belongs to the class I-like SAM-binding methyltransferase superfamily. RsmB/NOP family.

The protein localises to the cytoplasm. The enzyme catalyses cytidine(1407) in 16S rRNA + S-adenosyl-L-methionine = 5-methylcytidine(1407) in 16S rRNA + S-adenosyl-L-homocysteine + H(+). In terms of biological role, specifically methylates the cytosine at position 1407 (m5C1407) of 16S rRNA. This chain is Ribosomal RNA small subunit methyltransferase F, found in Escherichia coli (strain SE11).